Reading from the N-terminus, the 177-residue chain is Parathyroid hormone-related protein (177 aa).

A signal peptide spans 1–24 (MQRRLVQQWSVAVFLLSYAVPSCG). A propeptide spanning residues 25–34 (RSVEGLSRRL) is cleaved from the precursor. The tract at residues 57–68 (RFFLHHLIAEIH) is important for receptor binding. The disordered stretch occupies residues 74-177 (ATSEVSPNSK…TSLELDSRRH (104 aa)). Residues 76–90 (SEVSPNSKPSPNTKN) are compositionally biased toward polar residues. The short motif at 108–129 (TNKVETYKEQPLKTPGKKKKGK) is the Nuclear localization signal element. A compositionally biased stretch (basic and acidic residues) spans 109–118 (NKVETYKEQP). A compositionally biased stretch (basic residues) spans 122-132 (PGKKKKGKPGK).

It belongs to the parathyroid hormone family. In terms of assembly, interacts with PTH1R (via N-terminal extracellular domain). In terms of processing, there are 3 principal secretory forms, called PTHrP[1-36], PTHrP[38-94], and osteostatin (PTHrP[107-139]) arising from endoproteolytic cleavage of the initial translation product. Each of these secretory forms is believed to have one or more of its own receptors that mediates the normal paracrine, autocrine and endocrine actions. In terms of tissue distribution, ubiquitous. Also expressed in the mammary gland.

It is found in the secreted. The protein localises to the cytoplasm. Its subcellular location is the nucleus. Functionally, neuroendocrine peptide which is a critical regulator of cellular and organ growth, development, migration, differentiation and survival and of epithelial calcium ion transport. Acts by binding to its receptor, PTH1R, activating G protein-coupled receptor signaling. Regulates endochondral bone development and epithelial-mesenchymal interactions during the formation of the mammary glands and teeth. Required for skeletal homeostasis. Promotes mammary mesenchyme differentiation and bud outgrowth by modulating mesenchymal cell responsiveness to BMPs. Up-regulates BMPR1A expression in the mammary mesenchyme and this increases the sensitivity of these cells to BMPs and allows them to respond to BMP4 in a paracrine and/or autocrine fashion. BMP4 signaling in the mesenchyme, in turn, triggers epithelial outgrowth and augments MSX2 expression, which causes the mammary mesenchyme to inhibit hair follicle formation within the nipple sheath. Promotes colon cancer cell migration and invasion in an integrin alpha-6/beta-1-dependent manner through activation of Rac1. Its function is as follows. Potent inhibitor of osteoclastic bone resorption. This Homo sapiens (Human) protein is Parathyroid hormone-related protein.